The chain runs to 287 residues: Short-chain dehydrogenase virD (287 aa).

Positions 10, 36, 57, 85, 149, 153, 182, and 184 each coordinate NADP(+). Tyrosine 149 serves as the catalytic Proton acceptor. Catalysis depends on lysine 153, which acts as the Lowers pKa of active site Tyr.

Belongs to the short-chain dehydrogenases/reductases (SDR) family.

The protein operates within secondary metabolite biosynthesis. Its function is as follows. Short-chain dehydrogenase; part of the gene cluster that mediates the biosynthesis of virensols and trichoxide, fungal natural products that contain or are derived from a salicylaldehyde core. The pathway begins with the synthesis of the reduced chain in virensol C by the highly reducing polyketide synthase virA via condensation of one acetate and 8 malonate units. VirA has interesting programming rules since the first 2 ketides are fully reduced, the 3 following ketides undergo beta-dehydration, and the last 3 ketides are only reduced to beta-hydroxys to yield the trihydroxy portion. The production of aldehyde virensol C by virA alone is surprising, since virA does not contain a reductase (R) domain that is typically associated with reductive product release in HRPKS. The cupin-domain enzyme virC is involved in enhancing virA product turnover. The short-chain dehydrogenase virB then oxidizes the C-7 alcohol of virensol C to a ketone, yielding virensol D. Virensol D is further transformed to salicylaldehyde 5-deoxyaurocitrin by the short-chain dehydrogenase virD. VirD catalyzes the dehydrogenation of C-3 to form the beta-ketone aldehyde, which is followed by the generation of the nucleophilic C-2 that is required for the intramolecular aldol condensation between C-2 and C-7, itself followed by dehydration and aromatization which leads to salicylaldehyde 5-deoxyaurocitrin. While the dehydrogenation of virensol D is definitely catalyzed by virD, the aldol condensation and dehydration may be uncatalyzed or assisted by virD. The short chain dehydrogenase virG then converts salicylaldehyde 5-deoxyaurocitrin into virensol B which is further hydroxylated by the cytochrome P450 monooxygenase virE to yield the hydroquinone virensol A. VirI then may oxidize virensol A to form the quinone, while virH performs the epoxidation. Finally, the two remaining short-chain dehydrogenases, virK and virL, are probably responsible for reducing the ketones to the corresponding alcohols to furnish the epoxycyclohexanol structure in trichoxide. This is Short-chain dehydrogenase virD from Hypocrea virens (strain Gv29-8 / FGSC 10586) (Gliocladium virens).